We begin with the raw amino-acid sequence, 847 residues long: MATEKISPGMQQYLDIKKDYQDAFLLFRMGDFYELFYEDAVNAAQILEIALTSRNKNSENPIPMAGVPYHSAQQYIDVLIESGYKVAIAEQMEDPKQAVGVVKREVVQVITPGTVVDSSKPVGENNFLVALDRQEQAYGLAYMDLATGEFQVTSLADFDQACGEIRNLRAREVVVGYCLSEDEQQILSKQMNLLLSEVEEAMEDVQLLGDELSSLEKQTAGKLLAYVFQTQMRELSHLKKVHHYEIKDFLQMDYATKTSLDLTENARTGKKHGSLFWLMDETKTAMGGRLLRSWIQHPLIDKGRIIKRQDVVQVFLDYFFERSDLADSLKGVYDIERLVSRVSFGKTNPKDLLQLASTLSHVPQIRSILETIESPALESLVARLDAIPELENLISSAIDPDAPQVITEGNIIRTGFDETLDQYRLVMREGTSWIADIEAKEREASGITNLKIDYNKKDGYYFHVTNSQLGNVPSHFFRKATLKNSERFGTEELARIEGEMLEAREKSANLEYEIFMRIREEVGKYIQRLQALAQTLATVDVLQSFAVVAESQHLVRPSFTSSRSLQIKKGRHAVVEKVMGAQSYIPNSIELDQETDIQLITGPNMSGKSTYMRQLAMIVIMAQMGSYVPAEVASLPIFDAIFTRIGAADDLVSGQSTFMVEMMEANRAIRQASERSLILFDELGRGTATYDGMALAQAIIEYIHDRTKAKTLFATHYHELTDLSSSLTRLENVHVATLEKDGQVTFLHKIEAGPADKSYGIHVAKIAGLPTDLLRRADAILTDLENQEKREASLPASRTDSQKVSEQMSLFVEETENPVLTELRDLDIYNMTPLEVMAAVAELKKKL.

Residue 602–609 (GPNMSGKS) coordinates ATP. Positions 788–807 (EKREASLPASRTDSQKVSEQ) are disordered. The span at 796–807 (ASRTDSQKVSEQ) shows a compositional bias: polar residues.

The protein belongs to the DNA mismatch repair MutS family.

In terms of biological role, this protein is involved in the repair of mismatches in DNA. It is possible that it carries out the mismatch recognition step. This protein has a weak ATPase activity. In Streptococcus gordonii (strain Challis / ATCC 35105 / BCRC 15272 / CH1 / DL1 / V288), this protein is DNA mismatch repair protein MutS.